Reading from the N-terminus, the 473-residue chain is Photosystem II CP43 reaction center protein (473 aa).

The propeptide occupies 1 to 14; the sequence is MKTLYSLRRSYPVE. Position 15 is an N-acetylthreonine (T15). T15 carries the phosphothreonine modification. The next 5 membrane-spanning stretches (helical) occupy residues 69 to 93, 134 to 155, 178 to 200, 255 to 275, and 291 to 312; these read LFEV…PHLA, LIGP…KDRN, KALY…RKIT, KPFA…LSYS, and WFNN…ASQA. E367 provides a ligand contact to [CaMn4O5] cluster. A helical membrane pass occupies residues 447-471; the sequence is RARAAAAGFEKGIDRDFEPVLSMTP.

It belongs to the PsbB/PsbC family. PsbC subfamily. PSII is composed of 1 copy each of membrane proteins PsbA, PsbB, PsbC, PsbD, PsbE, PsbF, PsbH, PsbI, PsbJ, PsbK, PsbL, PsbM, PsbT, PsbX, PsbY, PsbZ, Psb30/Ycf12, at least 3 peripheral proteins of the oxygen-evolving complex and a large number of cofactors. It forms dimeric complexes. It depends on Binds multiple chlorophylls and provides some of the ligands for the Ca-4Mn-5O cluster of the oxygen-evolving complex. It may also provide a ligand for a Cl- that is required for oxygen evolution. PSII binds additional chlorophylls, carotenoids and specific lipids. as a cofactor.

It is found in the plastid. It localises to the chloroplast thylakoid membrane. Its function is as follows. One of the components of the core complex of photosystem II (PSII). It binds chlorophyll and helps catalyze the primary light-induced photochemical processes of PSII. PSII is a light-driven water:plastoquinone oxidoreductase, using light energy to abstract electrons from H(2)O, generating O(2) and a proton gradient subsequently used for ATP formation. This Abies alba (Edeltanne) protein is Photosystem II CP43 reaction center protein.